Here is a 355-residue protein sequence, read N- to C-terminus: Fructose-bisphosphate aldolase, cytoplasmic isozyme (355 aa).

Substrate is bound by residues R52 and K142. The Proton acceptor role is filled by E183. Catalysis depends on K225, which acts as the Schiff-base intermediate with dihydroxyacetone-P.

The protein belongs to the class I fructose-bisphosphate aldolase family.

The protein resides in the cytoplasm. The enzyme catalyses beta-D-fructose 1,6-bisphosphate = D-glyceraldehyde 3-phosphate + dihydroxyacetone phosphate. It participates in carbohydrate degradation; glycolysis; D-glyceraldehyde 3-phosphate and glycerone phosphate from D-glucose: step 4/4. This is Fructose-bisphosphate aldolase, cytoplasmic isozyme from Zea mays (Maize).